Here is a 336-residue protein sequence, read N- to C-terminus: Gastrula zinc finger protein XlCGF57.1 (336 aa).

11 consecutive C2H2-type zinc fingers follow at residues 6–28 (YTCT…MKIH), 34–56 (FICT…MKTH), 62–84 (FTCT…LTIH), 90–112 (FSCT…MKTH), 118–140 (FTCT…MKTH), 146–168 (FTCT…LKIH), 174–196 (FTCT…LKIH), 202–224 (FTCT…MKIH), 230–252 (FSCT…LTMH), 258–280 (FTCT…TKIH), and 286–308 (FSCT…LKIH).

This sequence belongs to the krueppel C2H2-type zinc-finger protein family.

The protein resides in the nucleus. Its function is as follows. May be involved in transcriptional regulation. The sequence is that of Gastrula zinc finger protein XlCGF57.1 from Xenopus laevis (African clawed frog).